Here is a 125-residue protein sequence, read N- to C-terminus: MINAPRVCVQVQSFYVESQSEPDEERFVFAYTITVRNLGRHEVQLLGRYWLITNGNGRQTEVQGEGVVGEQPIIHPGSEFQYTSGAVIETPLGTMEGHYHMTDHQGKAFQVSIPVFRLAIPSLIH.

The ApaG domain occupies 1 to 125 (MINAPRVCVQ…FRLAIPSLIH (125 aa)).

This chain is Protein ApaG, found in Pectobacterium carotovorum subsp. carotovorum (strain PC1).